A 444-amino-acid polypeptide reads, in one-letter code: Sprouty-related, EVH1 domain-containing protein 1 (444 aa).

S2 is modified (N-acetylserine). Residues A6–I123 enclose the WH1 domain. A disordered region spans residues I123–L151. Positions E135–S147 are enriched in acidic residues. Residue K224 is modified to N6-methyllysine. The KBD domain occupies S233 to P285. Residues S238 and S308 each carry the phosphoserine modification. The segment at S333–G444 is required for interaction with TESK1. In terms of domain architecture, SPR spans R334–A442.

In terms of assembly, homodimer and heterodimer. Able to interact with SPRED2 to form heterodimers. Interacts (via C-terminus) with TAOK1/MARKK (via C-terminus); the interaction does not affect TAOK1 kinase activity. Interacts (via C-terminus) with TESK1 (via C-terminus); the interaction inhibits TESK1 kinase activity. Interacts with CAV1. Interacts with RAS. Interacts with palmitoyltransferase ZDHHC17/HIP14; the interaction leads to palmitoylation of SPRED1. Post-translationally, palmitoylated by ZDHHC17/HIP14. In terms of processing, phosphorylated on tyrosine. Ubiquitinated. Weakly expressed in embryonic cell line HEK293.

It is found in the cell membrane. The protein resides in the membrane. It localises to the caveola. The protein localises to the nucleus. Functionally, tyrosine kinase substrate that inhibits growth-factor-mediated activation of MAP kinase. Negatively regulates hematopoiesis of bone marrow. Inhibits fibroblast growth factor (FGF)-induced retinal lens fiber differentiation, probably by inhibiting FGF-mediated phosphorylation of ERK1/2. Attenuates actin stress fiber formation via inhibition of TESK1-mediated phosphorylation of cofilin. Inhibits TGFB-induced epithelial-to-mesenchymal transition in lens epithelial cells. This is Sprouty-related, EVH1 domain-containing protein 1 (SPRED1) from Homo sapiens (Human).